Here is a 461-residue protein sequence, read N- to C-terminus: Bifunctional protein GlmU (461 aa).

Residues M1–R229 are pyrophosphorylase. Residues L8 to G11, K22, Q72, and G77 to T78 each bind UDP-N-acetyl-alpha-D-glucosamine. D102 contacts Mg(2+). UDP-N-acetyl-alpha-D-glucosamine contacts are provided by G139, E154, N169, and N227. Residue N227 coordinates Mg(2+). A linker region spans residues I230 to D250. The tract at residues G251 to K461 is N-acetyltransferase. R332 and K350 together coordinate UDP-N-acetyl-alpha-D-glucosamine. The Proton acceptor role is filled by H362. The UDP-N-acetyl-alpha-D-glucosamine site is built by Y365 and N376. Acetyl-CoA contacts are provided by A422 and R439.

The protein in the N-terminal section; belongs to the N-acetylglucosamine-1-phosphate uridyltransferase family. It in the C-terminal section; belongs to the transferase hexapeptide repeat family. As to quaternary structure, homotrimer. Mg(2+) is required as a cofactor.

The protein localises to the cytoplasm. The catalysed reaction is alpha-D-glucosamine 1-phosphate + acetyl-CoA = N-acetyl-alpha-D-glucosamine 1-phosphate + CoA + H(+). The enzyme catalyses N-acetyl-alpha-D-glucosamine 1-phosphate + UTP + H(+) = UDP-N-acetyl-alpha-D-glucosamine + diphosphate. It participates in nucleotide-sugar biosynthesis; UDP-N-acetyl-alpha-D-glucosamine biosynthesis; N-acetyl-alpha-D-glucosamine 1-phosphate from alpha-D-glucosamine 6-phosphate (route II): step 2/2. The protein operates within nucleotide-sugar biosynthesis; UDP-N-acetyl-alpha-D-glucosamine biosynthesis; UDP-N-acetyl-alpha-D-glucosamine from N-acetyl-alpha-D-glucosamine 1-phosphate: step 1/1. It functions in the pathway bacterial outer membrane biogenesis; LPS lipid A biosynthesis. Catalyzes the last two sequential reactions in the de novo biosynthetic pathway for UDP-N-acetylglucosamine (UDP-GlcNAc). The C-terminal domain catalyzes the transfer of acetyl group from acetyl coenzyme A to glucosamine-1-phosphate (GlcN-1-P) to produce N-acetylglucosamine-1-phosphate (GlcNAc-1-P), which is converted into UDP-GlcNAc by the transfer of uridine 5-monophosphate (from uridine 5-triphosphate), a reaction catalyzed by the N-terminal domain. In Lactobacillus delbrueckii subsp. bulgaricus (strain ATCC BAA-365 / Lb-18), this protein is Bifunctional protein GlmU.